The primary structure comprises 178 residues: Ribosome maturation factor RimP (178 aa).

Belongs to the RimP family.

The protein localises to the cytoplasm. In terms of biological role, required for maturation of 30S ribosomal subunits. The sequence is that of Ribosome maturation factor RimP from Streptococcus pyogenes serotype M1.